We begin with the raw amino-acid sequence, 191 residues long: Endoribonuclease YbeY (191 aa).

Zn(2+) contacts are provided by H122, H126, and H132. The segment at 164 to 191 (QPKPSGPKAFPDAAERAELDKEVPGGGI) is disordered. Positions 176–191 (AAERAELDKEVPGGGI) are enriched in basic and acidic residues.

Belongs to the endoribonuclease YbeY family. The cofactor is Zn(2+).

The protein resides in the cytoplasm. Its function is as follows. Single strand-specific metallo-endoribonuclease involved in late-stage 70S ribosome quality control and in maturation of the 3' terminus of the 16S rRNA. The sequence is that of Endoribonuclease YbeY from Corynebacterium aurimucosum (strain ATCC 700975 / DSM 44827 / CIP 107346 / CN-1) (Corynebacterium nigricans).